A 75-amino-acid chain; its full sequence is Exodeoxyribonuclease 7 small subunit (75 aa).

Belongs to the XseB family. In terms of assembly, heterooligomer composed of large and small subunits.

It is found in the cytoplasm. The enzyme catalyses Exonucleolytic cleavage in either 5'- to 3'- or 3'- to 5'-direction to yield nucleoside 5'-phosphates.. Its function is as follows. Bidirectionally degrades single-stranded DNA into large acid-insoluble oligonucleotides, which are then degraded further into small acid-soluble oligonucleotides. In Thermotoga maritima (strain ATCC 43589 / DSM 3109 / JCM 10099 / NBRC 100826 / MSB8), this protein is Exodeoxyribonuclease 7 small subunit.